A 349-amino-acid polypeptide reads, in one-letter code: Isopentenyl-diphosphate delta-isomerase (349 aa).

Residue R6 to K7 coordinates substrate. Residues A62–T64, S93, and N122 each bind FMN. Substrate is bound at residue Q152. Mg(2+) is bound at residue E153. FMN contacts are provided by residues K184, T214, G258 to G259, and A280 to G281.

Belongs to the IPP isomerase type 2 family. Homooctamer. Dimer of tetramers. FMN serves as cofactor. Requires NADPH as cofactor. It depends on Mg(2+) as a cofactor.

It is found in the cytoplasm. It catalyses the reaction isopentenyl diphosphate = dimethylallyl diphosphate. In terms of biological role, involved in the biosynthesis of isoprenoids. Catalyzes the 1,3-allylic rearrangement of the homoallylic substrate isopentenyl (IPP) to its allylic isomer, dimethylallyl diphosphate (DMAPP). This chain is Isopentenyl-diphosphate delta-isomerase, found in Bacillus anthracis (strain A0248).